The chain runs to 255 residues: ATP synthase subunit a (255 aa).

Helical transmembrane passes span 40–60, 109–129, 135–155, 163–183, 196–218, and 230–250; these read TEPIFMSLLIMVLFVLLASEV, LIGGSAAFIFFSNASALIPGV, NLNITIGCAVVVFVLFNYYGL, VAHLAGPKWYLAPLIFPIEVI, LMLNIGVDHLVASIFLGLVALFV, and IVVQTLVFCLLSCIYIGLATE.

Belongs to the ATPase A chain family. As to quaternary structure, F-type ATPases have 2 components, CF(1) - the catalytic core - and CF(0) - the membrane proton channel. CF(1) has five subunits: alpha(3), beta(3), gamma(1), delta(1), epsilon(1). CF(0) has three main subunits: a(1), b(2) and c(9-12). The alpha and beta chains form an alternating ring which encloses part of the gamma chain. CF(1) is attached to CF(0) by a central stalk formed by the gamma and epsilon chains, while a peripheral stalk is formed by the delta and b chains.

Its subcellular location is the cell inner membrane. In terms of biological role, key component of the proton channel; it plays a direct role in the translocation of protons across the membrane. In Sorangium cellulosum (strain So ce56) (Polyangium cellulosum (strain So ce56)), this protein is ATP synthase subunit a.